Consider the following 570-residue polypeptide: Glycine--tRNA ligase (570 aa).

Residues R95 and E159 each coordinate substrate. ATP is bound by residues 191 to 193, 201 to 206, 312 to 313, and 426 to 429; these read RNE, IRLREF, EV, and GLDR. Residue 206–210 participates in substrate binding; sequence FNQAE. 422 to 426 contacts substrate; the sequence is EPSFG.

The protein belongs to the class-II aminoacyl-tRNA synthetase family.

It localises to the cytoplasm. It catalyses the reaction tRNA(Gly) + glycine + ATP = glycyl-tRNA(Gly) + AMP + diphosphate. In terms of biological role, catalyzes the attachment of glycine to tRNA(Gly). The chain is Glycine--tRNA ligase from Archaeoglobus fulgidus (strain ATCC 49558 / DSM 4304 / JCM 9628 / NBRC 100126 / VC-16).